The following is a 191-amino-acid chain: Rho-related GTP-binding protein RhoH (191 aa).

11–18 contacts GTP; that stretch reads GDSAVGKT. An Effector region motif is present at residues 33 to 41; that stretch reads YKPTVYENT. 58–62 is a binding site for GTP; the sequence is DTAGN. The tract at residues 73–86 is interaction with ZAP70; that stretch reads YQQADVVLMCYSVA. 116 to 119 is a GTP binding site; it reads TQTD. Residue cysteine 188 is modified to Cysteine methyl ester. Cysteine 188 carries the S-geranylgeranyl cysteine lipid modification. The propeptide at 189-191 is removed in mature form; it reads KIL.

Belongs to the small GTPase superfamily. Rho family. Interacts with GDI1 and GDI2. Interacts with ZAP70 (via SH2 domains) and the interaction is enhanced by its phosphorylation by LCK. Interacts with SYK and the interaction is enhanced by its phosphorylation by FYN. Phosphorylated on tyrosine by LCK. Phosphorylated by FYN. Phosphorylation enhances the interactions with ZAP70 and SYK and is critical for its function in thymocyte development.

Its subcellular location is the cytoplasm. It is found in the cell membrane. In terms of biological role, binds GTP but lacks intrinsic GTPase activity and is resistant to Rho-specific GTPase-activating proteins. Inhibits the activation of NF-kappa-B by TNF and IKKB and the activation of CRK/p38 by TNF. Inhibits activities of RAC1, RHOA and CDC42. Negatively regulates leukotriene production in neutrophils. Negative regulator of hematopoietic progenitor cell proliferation, survival and migration. Critical regulator of thymocyte development and T-cell antigen receptor (TCR) signaling by mediating recruitment and activation of ZAP70. Required for phosphorylation of CD3Z, membrane translocation of ZAP70 and subsequent activation of the ZAP70-mediated pathways. Essential for efficient beta-selection and positive selection by promoting the ZAP70-dependent phosphorylation of the LAT signalosome during pre-TCR and TCR signaling. Crucial for thymocyte maturation during DN3 to DN4 transition and during positive selection. Plays critical roles in mast cell function by facilitating phosphorylation of SYK in Fc epsilon RI-mediated signal transduction. Essential for the phosphorylation of LAT, LCP2, PLCG1 and PLCG2 and for Ca(2+) mobilization in mast cells. The protein is Rho-related GTP-binding protein RhoH (RHOH) of Bos taurus (Bovine).